We begin with the raw amino-acid sequence, 247 residues long: Enolase-phosphatase E1 (247 aa).

Belongs to the HAD-like hydrolase superfamily. MasA/MtnC family. In terms of assembly, monomer. Mg(2+) is required as a cofactor.

It catalyses the reaction 5-methylsulfanyl-2,3-dioxopentyl phosphate + H2O = 1,2-dihydroxy-5-(methylsulfanyl)pent-1-en-3-one + phosphate. It functions in the pathway amino-acid biosynthesis; L-methionine biosynthesis via salvage pathway; L-methionine from S-methyl-5-thio-alpha-D-ribose 1-phosphate: step 3/6. It participates in amino-acid biosynthesis; L-methionine biosynthesis via salvage pathway; L-methionine from S-methyl-5-thio-alpha-D-ribose 1-phosphate: step 4/6. In terms of biological role, bifunctional enzyme that catalyzes the enolization of 2,3-diketo-5-methylthiopentyl-1-phosphate (DK-MTP-1-P) into the intermediate 2-hydroxy-3-keto-5-methylthiopentenyl-1-phosphate (HK-MTPenyl-1-P), which is then dephosphorylated to form the acireductone 1,2-dihydroxy-3-keto-5-methylthiopentene (DHK-MTPene). In Leptospira biflexa serovar Patoc (strain Patoc 1 / Ames), this protein is Enolase-phosphatase E1.